The primary structure comprises 819 residues: Myosin light chain kinase 3 (819 aa).

Positions 146–460 (VPWRRGSPGD…PGVGNPEPEQ (315 aa)) are disordered. Ser152 carries the phosphoserine modification. Basic and acidic residues-rich tracts occupy residues 158–170 (EENK…EGAK) and 183–196 (DARE…KADV). Positions 307–318 (GPGPQCPGPPGL) are enriched in pro residues. Phosphoserine is present on residues Ser355, Ser401, and Ser408. The region spanning 515–770 (VCQHEVLGGG…ATQCLKHEWL (256 aa)) is the Protein kinase domain. ATP-binding positions include 521 to 529 (LGGGRFGQV) and Lys544. Residue Asp636 is the Proton acceptor of the active site.

This sequence belongs to the protein kinase superfamily. CAMK Ser/Thr protein kinase family. It depends on Mg(2+) as a cofactor. In terms of processing, phosphorylated on serine residues.

It is found in the cytoplasm. It carries out the reaction L-seryl-[myosin light chain] + ATP = O-phospho-L-seryl-[myosin light chain] + ADP + H(+). The catalysed reaction is L-threonyl-[myosin light chain] + ATP = O-phospho-L-threonyl-[myosin light chain] + ADP + H(+). Kinase that phosphorylates MYL2 in vitro. Promotes sarcomere formation in cardiomyocytes and increases cardiomyocyte contractility. This is Myosin light chain kinase 3 (MYLK3) from Pongo abelii (Sumatran orangutan).